We begin with the raw amino-acid sequence, 132 residues long: Aspartate 1-decarboxylase (132 aa).

The active-site Schiff-base intermediate with substrate; via pyruvic acid is the serine 25. A Pyruvic acid (Ser) modification is found at serine 25. Threonine 57 is a substrate binding site. Catalysis depends on tyrosine 58, which acts as the Proton donor. 73–75 contacts substrate; the sequence is GAA.

Belongs to the PanD family. As to quaternary structure, heterooctamer of four alpha and four beta subunits. Pyruvate is required as a cofactor. Post-translationally, is synthesized initially as an inactive proenzyme, which is activated by self-cleavage at a specific serine bond to produce a beta-subunit with a hydroxyl group at its C-terminus and an alpha-subunit with a pyruvoyl group at its N-terminus.

It localises to the cytoplasm. It catalyses the reaction L-aspartate + H(+) = beta-alanine + CO2. Its pathway is cofactor biosynthesis; (R)-pantothenate biosynthesis; beta-alanine from L-aspartate: step 1/1. Its function is as follows. Catalyzes the pyruvoyl-dependent decarboxylation of aspartate to produce beta-alanine. This is Aspartate 1-decarboxylase from Pelotomaculum thermopropionicum (strain DSM 13744 / JCM 10971 / SI).